The primary structure comprises 29 residues: Cyclotide psyleio A (29 aa).

Positions Gly-1 to Asp-29 form a cross-link, cyclopeptide (Gly-Asp). Cystine bridges form between Cys-5–Cys-19, Cys-9–Cys-21, and Cys-14–Cys-26.

In terms of processing, this is a cyclic peptide.

Functionally, probably participates in a plant defense mechanism. This Psychotria brachyceras protein is Cyclotide psyleio A.